The primary structure comprises 118 residues: Small ribosomal subunit protein uS13 (118 aa).

Residues 94–118 (GLPLRGQRTKTNARTRKGPRKPIRK) are disordered.

The protein belongs to the universal ribosomal protein uS13 family. As to quaternary structure, part of the 30S ribosomal subunit. Forms a loose heterodimer with protein S19. Forms two bridges to the 50S subunit in the 70S ribosome.

Located at the top of the head of the 30S subunit, it contacts several helices of the 16S rRNA. In the 70S ribosome it contacts the 23S rRNA (bridge B1a) and protein L5 of the 50S subunit (bridge B1b), connecting the 2 subunits; these bridges are implicated in subunit movement. Contacts the tRNAs in the A and P-sites. The chain is Small ribosomal subunit protein uS13 from Chromohalobacter salexigens (strain ATCC BAA-138 / DSM 3043 / CIP 106854 / NCIMB 13768 / 1H11).